The primary structure comprises 1362 residues: Dicer-like protein 2-2 (1362 aa).

The region spanning 30 to 197 (MLNESLKRNL…EIVESNLGSI (168 aa)) is the Helicase ATP-binding domain. ATP is bound at residue 43–50 (MPTGTGKT). Positions 139 to 142 (DEAH) match the DEAH box motif. The Helicase C-terminal domain occupies 343–505 (LLDELSKAYR…KLQNAERRQI (163 aa)). One can recognise a Dicer dsRNA-binding fold domain in the interval 536-630 (AVGYLYNFCS…VPTQVSDHLE (95 aa)). RNase III domains are found at residues 889-1033 (AQIL…TDGG) and 1075-1258 (IVDM…IDSQ).

It belongs to the helicase family. Dicer subfamily.

Dicer-like endonuclease involved in cleaving double-stranded RNA in the RNA interference (RNAi) pathway. Produces 21 to 25 bp dsRNAs (siRNAs) which target the selective destruction of homologous RNAs leading to sequence-specific suppression of gene expression, called post-transcriptional gene silencing (PTGS). Part of a broad host defense response against viral infection and transposons. The protein is Dicer-like protein 2-2 (dcl2-2) of Aspergillus niger (strain ATCC MYA-4892 / CBS 513.88 / FGSC A1513).